The primary structure comprises 187 residues: MTFAKQSCFNSIILLSIATSYFKIGHKISELGNRIEKMTTFLIKHKASGKFLHPKGGSSNPANDTNLVLHSDIHERMYFQFDVVDERWGYIKHAASGKIVHPLGGKADPPNETKLVLHQDRHDRALFAMDFFNDNIIHKAGKYVHPKGGSTNPPNETLTVMHGDKHGAMEFIFVSPKNKDKRVLVYV.

The signal sequence occupies residues 1-37; the sequence is MTFAKQSCFNSIILLSIATSYFKIGHKISELGNRIEK. T39 carries the N-acetylthreonine modification. N-acetyl-alpha-D-galactosamine-binding positions include 53 to 56, D64, 72 to 76, H101, G104, E112, 120 to 122, H145, G148, E156, and 164 to 166; these read HPKG, DIHER, DRH, and DKH.

Homodimer. As to expression, highest expression in the posterior part of the mantle. Highly expressed in gills and to a lesser extent in mid mantle and anterior muscle. Lowest expression in digestive gland and posterior adductor muscle. Scarcely detectable in hemocytes.

With respect to regulation, agglutination of E.coli is inhibited by alpha-galactoside melibiose, but not by beta-galactoside lactose. Functionally, alpha-D-galactose-binding lectin. Binds D-GalNAc, but not glucose or its derivatives. Has hemagglutinating activity towards rabbit erythrocytes. Agglutinates bacteria. Has bacteriostatic activity on both Gram-positive and Gram-negative bacteria including B.subtilis, S.aureus, E.coli and V.parahaemolyticus, respectively. Has a dose-dependent cytotoxic effect on the human globotriaosylceramide (Gb3)-expressing Epstein-Barr virus (EBV)-positive Burkitt's lymphoma (Raji) cell line. Has dose-dependent cytotoxic effect on another Burkitt's lymphoma (Ramos) cell line, which does not possess the EBV genome, but also expresses Gb3. Binds to Gb3 in these cells leading to phosphorylation of MEK1/2, ERK1/2, JNK and p38 kinase, activation of caspase-9/3 and to expression of p21 and tumor necrosis factor (TNF)-alpha. No cytotoxic effect on the human chronic myelogenous leukemia (K-562) cell line, which does not express Gb3. May be involved in innate immunity acting as an antibacterial or antifungal agent. May be a pattern recognition receptor (PRR) involved in recognition of glycans found on parasitic or symbiotic microorganisms. This is Alpha-D-galactose-binding lectin from Mytilus galloprovincialis (Mediterranean mussel).